The following is a 234-amino-acid chain: Purine nucleoside phosphorylase DeoD-type (234 aa).

Position 4 (histidine 4) interacts with a purine D-ribonucleoside. Phosphate-binding positions include glycine 20, arginine 24, arginine 43, and 87-90; that span reads RVGT. A purine D-ribonucleoside contacts are provided by residues glutamate 162, 178–180, and 202–203; these read EME and SD. Aspartate 203 functions as the Proton donor in the catalytic mechanism.

Belongs to the PNP/UDP phosphorylase family. In terms of assembly, homohexamer; trimer of homodimers.

The enzyme catalyses a purine D-ribonucleoside + phosphate = a purine nucleobase + alpha-D-ribose 1-phosphate. It catalyses the reaction a purine 2'-deoxy-D-ribonucleoside + phosphate = a purine nucleobase + 2-deoxy-alpha-D-ribose 1-phosphate. Catalyzes the reversible phosphorolytic breakdown of the N-glycosidic bond in the beta-(deoxy)ribonucleoside molecules, with the formation of the corresponding free purine bases and pentose-1-phosphate. Its function is as follows. Cleavage of adenosine and its derivatives. The sequence is that of Purine nucleoside phosphorylase DeoD-type from Geobacillus stearothermophilus (Bacillus stearothermophilus).